Reading from the N-terminus, the 376-residue chain is PqqA peptide cyclase (376 aa).

The region spanning 7 to 222 is the Radical SAM core domain; sequence VGLPLWLLAE…TNEYRDKLKA (216 aa). The [4Fe-4S] cluster site is built by Cys-21, Cys-25, and Cys-28.

This sequence belongs to the radical SAM superfamily. PqqE family. As to quaternary structure, interacts with PqqD. The interaction is necessary for activity of PqqE. The cofactor is [4Fe-4S] cluster.

The enzyme catalyses [PQQ precursor protein] + S-adenosyl-L-methionine = E-Y cross-linked-[PQQ precursor protein] + 5'-deoxyadenosine + L-methionine + H(+). It functions in the pathway cofactor biosynthesis; pyrroloquinoline quinone biosynthesis. Catalyzes the cross-linking of a glutamate residue and a tyrosine residue in the PqqA protein as part of the biosynthesis of pyrroloquinoline quinone (PQQ). The sequence is that of PqqA peptide cyclase from Pseudomonas putida (strain ATCC 47054 / DSM 6125 / CFBP 8728 / NCIMB 11950 / KT2440).